Reading from the N-terminus, the 112-residue chain is Large ribosomal subunit protein uL24 (112 aa).

Belongs to the universal ribosomal protein uL24 family. Part of the 50S ribosomal subunit.

One of two assembly initiator proteins, it binds directly to the 5'-end of the 23S rRNA, where it nucleates assembly of the 50S subunit. Functionally, one of the proteins that surrounds the polypeptide exit tunnel on the outside of the subunit. This Magnetococcus marinus (strain ATCC BAA-1437 / JCM 17883 / MC-1) protein is Large ribosomal subunit protein uL24.